The sequence spans 509 residues: MYHFGATLWPGVGSLCLLLAGATWAPSPNSPDAKFESKAALLAARGPEELLCFTERLEDLVCFWEEAGSAGVGPEDYSFSYQLEGEPWKPCHLHQGPTARGSVRFWCSLPTADTSSFVPLELRVTEVSSGAPRYHRIIHINEVVLLDPPAGLLARRAEESGHVVLRWLPPPGAPMASLIRYEVNISTENAAGGVQRVEILDGRTECVLSNLRGGTRYTFMVRARMAEPSFGGFWSAWSEPASLLTASDLDPLILTLSLILVLILLLLAVLALLSHRRTLKQKIWPGIPSPEGEFEGLFTTHKGNFQLWLYQTDGCLWWSPCTPFAEDPPAPLEVLSERCWGVTQAVEPAADDEGSLLEPVGSEHARDTYLVLDKWLLPRRPASEDLPQPGGDLDMAAMDEASEASFCSSALALKPGPEGASAASFEYTILDPSSQLLRPRALPAELPPTPPHLKYLYLVVSDSGISTDYSSGGSQETQGGSSSGPYSNPYENSLVPAPEPSPPNYVTCS.

A signal peptide spans 1 to 24; it reads MYHFGATLWPGVGSLCLLLAGATW. Over 25 to 251 the chain is Extracellular; that stretch reads APSPNSPDAK…SLLTASDLDP (227 aa). 2 cysteine pairs are disulfide-bonded: Cys52-Cys62 and Cys91-Cys107. Residues 148-248 form the Fibronectin type-III domain; that stretch reads PPAGLLARRA…EPASLLTASD (101 aa). The N-linked (GlcNAc...) asparagine glycan is linked to Asn184. The WSXWS motif motif lies at 234-238; sequence WSAWS. The helical transmembrane segment at 252 to 274 threads the bilayer; sequence LILTLSLILVLILLLLAVLALLS. The Cytoplasmic portion of the chain corresponds to 275 to 509; the sequence is HRRTLKQKIW…PSPPNYVTCS (235 aa). Lys282 participates in a covalent cross-link: Glycyl lysine isopeptide (Lys-Gly) (interchain with G-Cter in ubiquitin). Positions 283–291 match the Box 1 motif motif; sequence IWPGIPSPE. Tyr369 and Tyr427 each carry phosphotyrosine; by JAK2. Residues 453-458 carry the ITIM motif motif; it reads LKYLYL. Residue Lys454 forms a Glycyl lysine isopeptide (Lys-Gly) (interchain with G-Cter in ubiquitin) linkage. Tyr455, Tyr457, Tyr469, Tyr486, Tyr490, and Tyr505 each carry phosphotyrosine; by JAK2. A disordered region spans residues 467-509; it reads TDYSSGGSQETQGGSSSGPYSNPYENSLVPAPEPSPPNYVTCS. A compositionally biased stretch (low complexity) spans 470 to 493; that stretch reads SSGGSQETQGGSSSGPYSNPYENS.

This sequence belongs to the type I cytokine receptor family. Type 1 subfamily. As to quaternary structure, forms homodimers on EPO stimulation. The tyrosine-phosphorylated form interacts with several SH2 domain-containing proteins including LYN, the adapter protein SH2B2, PTPN6, PTPN11, JAK2, PI3 kinases, STAT5A/B, SOCS3, CRKL. Interacts with INPP5D/SHIP1. SH2B2 binding inhibits the JAK-STAT signaling. Interacts with RHEX; this interaction occurs in a erythropoietin (EPO)-dependent manner. Interacts with ATXN2L. On EPO stimulation, phosphorylated on C-terminal tyrosine residues by JAK2. The phosphotyrosine motifs are also recruitment sites for several SH2-containing proteins and adapter proteins which mediate cell proliferation. Phosphorylation on Tyr-455 is required for PTPN6 interaction, Tyr-427 for PTPN11. Tyr-427 is also required for SOCS3 binding, but Tyr-455/Tyr-457 motif is the preferred binding site. Post-translationally, ubiquitinated by the ECS(SOCS2) complex following ligand-binding and phosphorylation by JAK2, leading to its degradation by the proteasome. Regulation by the ECS(SOCS2) complex acts as a negative feedback loop of erythropoietin-mediated signaling pathway. Ubiquitination at Lys-282 mediates receptor internalization, whereas ubiquitination at Lys-454 promotes trafficking of activated receptors to the lysosomes for degradation. Ubiquitinated by NOSIP; appears to be either multi-monoubiquitinated or polyubiquitinated. Ubiquitination mediates proliferation and survival of EPO-dependent cells.

It localises to the cell membrane. Receptor for erythropoietin, which mediates erythropoietin-induced erythroblast proliferation and differentiation. Upon EPO stimulation, EPOR dimerizes triggering the JAK2/STAT5 signaling cascade. In some cell types, can also activate STAT1 and STAT3. May also activate the LYN tyrosine kinase. Functionally, isoform EPOR-T acts as a dominant-negative receptor of EPOR-mediated signaling. This is Erythropoietin receptor (EPOR) from Sus scrofa (Pig).